We begin with the raw amino-acid sequence, 496 residues long: Cytochrome P450 71D95 (496 aa).

The chain crosses the membrane as a helical; Signal-anchor span at residues 2-22 (ELQISSAIIILVATFVASLLI). Residue cysteine 436 participates in heme binding.

This sequence belongs to the cytochrome P450 family. Heme serves as cofactor.

The protein resides in the endoplasmic reticulum membrane. The catalysed reaction is (4S)-limonene + reduced [NADPH--hemoprotein reductase] + O2 = (1S,6R)-isopiperitenol + oxidized [NADPH--hemoprotein reductase] + H2O + H(+). Functionally, hydroxylates both (+)- and (-)-limonene to (+) and (-)-trans-isopiperitenol. The protein is Cytochrome P450 71D95 (CYP71D95) of Mentha spicata (Spearmint).